The chain runs to 261 residues: Phosphonates import ATP-binding protein PhnC (261 aa).

The 243-residue stretch at 15–257 (LCLENTSAVY…LERSAIPPKR (243 aa)) folds into the ABC transporter domain. 48 to 55 (GPSGSGKS) contributes to the ATP binding site.

It belongs to the ABC transporter superfamily. Phosphonates importer (TC 3.A.1.9.1) family. As to quaternary structure, the complex is composed of two ATP-binding proteins (PhnC), two transmembrane proteins (PhnE) and a solute-binding protein (PhnD).

Its subcellular location is the cell inner membrane. It carries out the reaction phosphonate(out) + ATP + H2O = phosphonate(in) + ADP + phosphate + H(+). Its function is as follows. Part of the ABC transporter complex PhnCDE involved in phosphonates import. Responsible for energy coupling to the transport system. In Hyphomonas neptunium (strain ATCC 15444), this protein is Phosphonates import ATP-binding protein PhnC.